Here is a 555-residue protein sequence, read N- to C-terminus: Steroid-22-oyl-CoA synthetase (555 aa).

The protein belongs to the ATP-dependent AMP-binding enzyme family.

The catalysed reaction is 3-oxochol-4-en-22-oate + ATP + CoA = 3-oxochol-4-en-22-oyl-CoA + AMP + diphosphate. The enzyme catalyses 3-hydroxy-9-oxo-9,10-seco-chola-1,3,5-trien-22-oate + ATP + CoA = 3-hydroxy-9-oxo-9,10-seco-chola-1,3,5-trien-22-oyl-CoA + AMP + diphosphate. It participates in steroid metabolism. In terms of biological role, involved in cholate catabolism. Catalyzes the ATP-dependent formation of CoA thioesters of steroids with isopropanoyl side chains, likely occurring as degradation intermediates. Can use 4-BNC, HSBNC and HIDP as substrate. The polypeptide is Steroid-22-oyl-CoA synthetase (Rhodococcus jostii (strain RHA1)).